The following is a 211-amino-acid chain: Thymidylate kinase (211 aa).

ATP is bound at residue 11–18; it reads GPDGAGKT.

This sequence belongs to the thymidylate kinase family.

The enzyme catalyses dTMP + ATP = dTDP + ADP. In terms of biological role, phosphorylation of dTMP to form dTDP in both de novo and salvage pathways of dTTP synthesis. In Streptococcus equi subsp. zooepidemicus (strain H70), this protein is Thymidylate kinase.